We begin with the raw amino-acid sequence, 200 residues long: Cuticle protein 19.8 (200 aa).

Repeat copies occupy residues Ala-20–Ala-23, Ala-26–Ala-29, and Ala-43–Ala-46. Residues His-56–Ala-127 enclose the Chitin-binding type R&amp;R domain. The segment at Thr-70–Tyr-89 is disordered. 5 consecutive repeat copies span residues Ala-126 to Val-129, Ala-144 to Ala-147, Ala-150 to Val-153, Ala-159 to Ala-162, and Ala-177 to Ala-180.

Component of the cuticle of migratory locust which contains more than 100 different structural proteins. This Locusta migratoria (Migratory locust) protein is Cuticle protein 19.8.